The primary structure comprises 289 residues: Polyamine aminopropyltransferase (289 aa).

A PABS domain is found at 5–245 (PGPIVLVEPL…YAVNYILGSL (241 aa)). Gln-36 contacts S-methyl-5'-thioadenosine. Spermidine-binding residues include His-67 and Glu-91. Residues Asp-111 and 143-144 (DG) contribute to the S-methyl-5'-thioadenosine site. Asp-164 acts as the Proton acceptor in catalysis.

This sequence belongs to the spermidine/spermine synthase family. In terms of assembly, homodimer or homotetramer.

The protein localises to the cytoplasm. The catalysed reaction is S-adenosyl 3-(methylsulfanyl)propylamine + putrescine = S-methyl-5'-thioadenosine + spermidine + H(+). Its pathway is amine and polyamine biosynthesis; spermidine biosynthesis; spermidine from putrescine: step 1/1. Catalyzes the irreversible transfer of a propylamine group from the amino donor S-adenosylmethioninamine (decarboxy-AdoMet) to putrescine (1,4-diaminobutane) to yield spermidine. This is Polyamine aminopropyltransferase from Pyrobaculum arsenaticum (strain DSM 13514 / JCM 11321 / PZ6).